The sequence spans 578 residues: Proline--tRNA ligase (578 aa).

The protein belongs to the class-II aminoacyl-tRNA synthetase family. ProS type 1 subfamily. As to quaternary structure, homodimer.

It localises to the cytoplasm. The catalysed reaction is tRNA(Pro) + L-proline + ATP = L-prolyl-tRNA(Pro) + AMP + diphosphate. In terms of biological role, catalyzes the attachment of proline to tRNA(Pro) in a two-step reaction: proline is first activated by ATP to form Pro-AMP and then transferred to the acceptor end of tRNA(Pro). As ProRS can inadvertently accommodate and process non-cognate amino acids such as alanine and cysteine, to avoid such errors it has two additional distinct editing activities against alanine. One activity is designated as 'pretransfer' editing and involves the tRNA(Pro)-independent hydrolysis of activated Ala-AMP. The other activity is designated 'posttransfer' editing and involves deacylation of mischarged Ala-tRNA(Pro). The misacylated Cys-tRNA(Pro) is not edited by ProRS. In Burkholderia ambifaria (strain ATCC BAA-244 / DSM 16087 / CCUG 44356 / LMG 19182 / AMMD) (Burkholderia cepacia (strain AMMD)), this protein is Proline--tRNA ligase.